We begin with the raw amino-acid sequence, 800 residues long: Mitochondrial intermediate peptidase (800 aa).

The transit peptide at methionine 1–leucine 23 directs the protein to the mitochondrion. Polar residues predominate over residues arginine 27–aspartate 41. The disordered stretch occupies residues arginine 27 to glutamate 59. Histidine 563 lines the Zn(2+) pocket. Residue glutamate 564 is part of the active site. Positions 567 and 570 each coordinate Zn(2+).

The protein belongs to the peptidase M3 family. Zn(2+) is required as a cofactor.

The protein resides in the mitochondrion matrix. It catalyses the reaction Release of an N-terminal octapeptide as second stage of processing of some proteins imported into the mitochondrion.. In terms of biological role, cleaves proteins, imported into the mitochondrion, to their mature size. While most mitochondrial precursor proteins are processed to the mature form in one step by mitochondrial processing peptidase (MPP), the sequential cleavage by MIP of an octapeptide after initial processing by MPP is a required step for a subgroup of nuclear-encoded precursor proteins destined for the matrix or the inner membrane. The chain is Mitochondrial intermediate peptidase (oct1) from Aspergillus oryzae (strain ATCC 42149 / RIB 40) (Yellow koji mold).